A 466-amino-acid chain; its full sequence is Cysteine--tRNA ligase (466 aa).

A Zn(2+)-binding site is contributed by C28. A 'HIGH' region motif is present at residues 30 to 40 (PTVYNYIHIGN). 3 residues coordinate Zn(2+): C208, H233, and E237. Residues 265–269 (KMSKS) carry the 'KMSKS' region motif. K268 lines the ATP pocket.

It belongs to the class-I aminoacyl-tRNA synthetase family. As to quaternary structure, monomer. Zn(2+) is required as a cofactor.

It localises to the cytoplasm. The enzyme catalyses tRNA(Cys) + L-cysteine + ATP = L-cysteinyl-tRNA(Cys) + AMP + diphosphate. The polypeptide is Cysteine--tRNA ligase (Staphylococcus carnosus (strain TM300)).